The chain runs to 336 residues: MNFMKRNVEKEVTDQLAYRRKMLQDWRGERLTGHQINLASIDLNLLVALEALLEYRNVTHAGQHIGRSQPAMSRALGRLRGLFNDDLLVRSSTGLIPTPQGEHLAQRLPSALRTIREMVTSRSVISKEWGRGATLAIPDHQALAVLPRLLPWLRERAPHLDTLACLPFDRAVRGLEQGDIDLAVGHIDVQLPGYFRRSLYTDRFACLLRHGHPALAQEWTIDNFATLRHAAISTDSPDHFGPIYDHLPNLRADRSPILFSSVLTAAVVASATDLVLLVPRRVATQVSAMLPLRVVDPPLEPAPYKVMLIWHERCHHDPQHKWLRKEVAAALETGAD.

The region spanning 41–98 (IDLNLLVALEALLEYRNVTHAGQHIGRSQPAMSRALGRLRGLFNDDLLVRSSTGLIPT) is the HTH lysR-type domain. A DNA-binding region (H-T-H motif) is located at residues 58 to 77 (VTHAGQHIGRSQPAMSRALG).

Belongs to the LysR transcriptional regulatory family.

Acts in trans to stimulate nod gene expression via nodD3 and exo gene expression via SyrA. The sequence is that of HTH-type transcriptional regulator SyrM (syrM) from Rhizobium etli.